The chain runs to 352 residues: uncharacterized protein (352 aa).

Positions 1–40 are disordered; it reads MTSTMKLFTDHAEISVRERPPQRNNNNQEQDNSNRPAPRR. Basic and acidic residues predominate over residues 8 to 21; it reads FTDHAEISVRERPP. Residues 22–36 are compositionally biased toward low complexity; that stretch reads QRNNNNQEQDNSNRP. A helical transmembrane segment spans residues 317–333; sequence MTITLPCGLTIAFFVYY.

The protein localises to the host cell membrane. This is an uncharacterized protein from Diadromus pulchellus idnoreovirus 1 (DpIRV-1).